The chain runs to 472 residues: Ulvan lyase (472 aa).

The first 21 residues, 1-21 (MIIKQYLLKISLCVLLLGCDS), serve as a signal peptide directing secretion. 2 residues coordinate substrate: Asn-46 and Asn-109. Catalysis depends on His-110, which acts as the Proton donor. Substrate contacts are provided by Lys-112 and His-130. Residue Tyr-175 is the Proton acceptor of the active site. Arg-191, His-195, and Tyr-233 together coordinate substrate. His-195 contributes to the Zn(2+) binding site. Residues His-251, Cys-253, and His-265 each coordinate Zn(2+). Position 265 (His-265) interacts with substrate.

This sequence belongs to the polysaccharide lyase 25 family.

Ulvan lyase involved in ulvan degradation. Ulvan is the main polysaccharide component of the Ulvales (green seaweed) cell wall. It is composed of disaccharide building blocks comprising 3-sulfated rhamnose (Rha3S) linked to D-glucuronic acid (GlcA), L-iduronic acid (IduA), or D-xylose (Xyl). Ulvan lyase catalyzes the endolytic cleavage of the glycosidic bond between Rha3S and the uronic acids GlcA or IduA, producing oligosaccharides that have unsaturated 4-deoxy-L-threo-hex-4-enopyranosiduronic acid (deltaUA) at the non-reducing end. This results eventually in the degradation of the ulvan polysaccharide into deltaUA-Rha3S disaccharides and deltaUA-Rha3S-Xyl-Rha3S tetrasaccharides. In Nonlabens ulvanivorans (Persicivirga ulvanivorans), this protein is Ulvan lyase.